A 106-amino-acid chain; its full sequence is Immunoglobulin lambda constant 3 (106 aa).

In terms of domain architecture, Ig-like spans 7 to 101; the sequence is PSVTLFPPSS…EGSTVEKTVA (95 aa). Cysteines 28 and 87 form a disulfide.

As to quaternary structure, immunoglobulins are composed of two identical heavy chains and two identical light chains; disulfide-linked.

The protein localises to the secreted. It is found in the cell membrane. Constant region of immunoglobulin light chains. Immunoglobulins, also known as antibodies, are membrane-bound or secreted glycoproteins produced by B lymphocytes. In the recognition phase of humoral immunity, the membrane-bound immunoglobulins serve as receptors which, upon binding of a specific antigen, trigger the clonal expansion and differentiation of B lymphocytes into immunoglobulins-secreting plasma cells. Secreted immunoglobulins mediate the effector phase of humoral immunity, which results in the elimination of bound antigens. The antigen binding site is formed by the variable domain of one heavy chain, together with that of its associated light chain. Thus, each immunoglobulin has two antigen binding sites with remarkable affinity for a particular antigen. The variable domains are assembled by a process called V-(D)-J rearrangement and can then be subjected to somatic hypermutations which, after exposure to antigen and selection, allow affinity maturation for a particular antigen. This chain is Immunoglobulin lambda constant 3, found in Homo sapiens (Human).